Consider the following 152-residue polypeptide: Heavy metal-associated isoprenylated plant protein 20 (152 aa).

One can recognise an HMA domain in the interval 27–90; that stretch reads MQTVNIKVKM…RIERTGKKAE (64 aa). Cd(2+)-binding residues include cysteine 38 and cysteine 41. Cysteine 149 is modified (cysteine methyl ester). Cysteine 149 carries S-farnesyl cysteine lipidation. Positions 150-152 are cleaved as a propeptide — removed in mature form; it reads TVM.

This sequence belongs to the HIPP family. In terms of assembly, interacts with ZHD11/HB29. As to expression, expressed in roots, shoot apical meristem, leaves and flowers.

The protein resides in the membrane. Functionally, heavy-metal-binding protein. Binds cadmium. May be involved in cadmium transport and play a role in cadmium detoxification. The protein is Heavy metal-associated isoprenylated plant protein 20 of Arabidopsis thaliana (Mouse-ear cress).